We begin with the raw amino-acid sequence, 101 residues long: Small ribosomal subunit protein uS14 (101 aa).

Belongs to the universal ribosomal protein uS14 family. In terms of assembly, part of the 30S ribosomal subunit. Contacts proteins S3 and S10.

In terms of biological role, binds 16S rRNA, required for the assembly of 30S particles and may also be responsible for determining the conformation of the 16S rRNA at the A site. The chain is Small ribosomal subunit protein uS14 from Brucella abortus (strain 2308).